A 446-amino-acid chain; its full sequence is Phosphoglucosamine mutase (446 aa).

Serine 100 functions as the Phosphoserine intermediate in the catalytic mechanism. Residues serine 100, aspartate 241, aspartate 243, and aspartate 245 each coordinate Mg(2+). Serine 100 bears the Phosphoserine mark.

This sequence belongs to the phosphohexose mutase family. It depends on Mg(2+) as a cofactor. In terms of processing, activated by phosphorylation.

The catalysed reaction is alpha-D-glucosamine 1-phosphate = D-glucosamine 6-phosphate. Catalyzes the conversion of glucosamine-6-phosphate to glucosamine-1-phosphate. This chain is Phosphoglucosamine mutase, found in Methylorubrum populi (strain ATCC BAA-705 / NCIMB 13946 / BJ001) (Methylobacterium populi).